A 1072-amino-acid polypeptide reads, in one-letter code: MSKKRVHEIAKELKSHGIELDNKEVVTELSSLGYDVKSHSSSLDDDQATAAVQKILDKRKPKQATPPVTAKGFVVRRKVGPPAGATADSGAEASQAAEPAYEPPSAPEPATFAAEEPVQAPPPVEAPRAPVEAPSAPEPQRVEAPVAAATEPTAPAAVTSTPPAQVAEATKAPAAAEVASPPPAAEAPQAPVEAPRAAVPAPAAAQPRPSVQESTTLPQPPPRSPVPPAVRTPSSTSSSATVVSRGPAPGYQQRGGPGGGRPGGPGGPGGRPGGPGGPGGRPGGPGGPGGRPGGPGGPGGRPGGPGGRPSYQGPGSYQGAGRPGQGPVRPTSAPGTGVQASASASPIPQGPTIMVGGVPHAQVSPTGTARPTATQAVVISRPLIQVRRVTPTAGQAKQYPMAPGRTGIPERREYKVVPDHLGRGRELVDVSKNKERGQRKRTSGDTQSVSKQELTDMVWGRVTIPIRGKKRKPTKKGAKTQITQMAEEKKVIKLQEGISVSDLGQRMGVRSAELIKKLMGLGKMATANQLVDADTAEMIAGDYGWKIDRVGFEVEDYLPEVETRPEDERPRPPVVAIMGHVDHGKTSLLDAIRKASVAQGEAGGITQHIGAYSITTARGDVTFLDTPGHEAFTSMRARGADVTDIVVLVVASDDGVMPQTVEAIKHAKAAEVPIVVAINKMDLPTANLDRVKKDLATHELVPEEWGGDTIMVPVSAKTKENLELLLENLALQAEVLELASNPLRPSVGAIIEAKLDRGRGPVATVLVQEGTLKLGDAVVTGSHYGRVRAMTNSRGEQVKEVKPGYCAEVVGLSGVPGAGDAINVVADEKAAKQIAEHRNMKERQTELSKVSRESLEQLFAKTKAGGGPKELRVVIKADVQGSAEAVKQAVQKLSTHKVKVEVVHSGVGAITEGDVMRAAASKGVVLGFNVNPESGAEAAAKAQEVVLKSYSIIYELIDGVRTEMEGLLEPIRTERKLGRAEVRNTFNVPRLGTIAGAAVLDGVMKRGAIVRLMRENKQLFSGKMASLRRFKDDVKEVAQGFECGIGIESFNDLKPGDIIEAYEIVETRQSLT.

Disordered regions lie at residues 55–369 (ILDK…TGTA) and 426–452 (ELVDVSKNKERGQRKRTSGDTQSVSKQ). Composition is skewed to low complexity over residues 91–100 (AEASQAAEPA), 108–118 (EPATFAAEEPV), 126–179 (APRA…AEVA), and 186–212 (EAPQAPVEAPRAAVPAPAAAQPRPSVQ). The segment covering 218–230 (PQPPPRSPVPPAV) has biased composition (pro residues). The segment covering 231 to 245 (RTPSSTSSSATVVSR) has biased composition (low complexity). Positions 253 to 307 (QRGGPGGGRPGGPGGPGGRPGGPGGPGGRPGGPGGPGGRPGGPGGPGGRPGGPGG) are enriched in gly residues. Residues 426–436 (ELVDVSKNKER) are compositionally biased toward basic and acidic residues. The 168-residue stretch at 570–737 (PRPPVVAIMG…NLALQAEVLE (168 aa)) folds into the tr-type G domain. The segment at 579–586 (GHVDHGKT) is G1. Residue 579–586 (GHVDHGKT) coordinates GTP. The G2 stretch occupies residues 604–608 (GITQH). A G3 region spans residues 625–628 (DTPG). Residues 625-629 (DTPGH) and 679-682 (NKMD) each bind GTP. Residues 679 to 682 (NKMD) form a G4 region. The segment at 715-717 (SAK) is G5.

The protein belongs to the TRAFAC class translation factor GTPase superfamily. Classic translation factor GTPase family. IF-2 subfamily.

It is found in the cytoplasm. Functionally, one of the essential components for the initiation of protein synthesis. Protects formylmethionyl-tRNA from spontaneous hydrolysis and promotes its binding to the 30S ribosomal subunits. Also involved in the hydrolysis of GTP during the formation of the 70S ribosomal complex. The polypeptide is Translation initiation factor IF-2 (Myxococcus xanthus (strain DK1622)).